The chain runs to 299 residues: Fluorinase (299 aa).

Residues Asp-16, 21-23 (DDS), Tyr-77, Ser-158, Asp-210, Asn-215, 269-270 (SR), and 277-279 (RNA) contribute to the S-adenosyl-L-methionine site.

In terms of assembly, homohexamer; dimers of trimer.

The enzyme catalyses fluoride + S-adenosyl-L-methionine = 5'-deoxy-5'-fluoroadenosine + L-methionine. With respect to regulation, competitively inhibited by S-adenosyl-L-homocysteine (AdoHcy) and S-adenosyl-L-homocysteine (SAH). Sinefungin is only weakly inhibitory. In terms of biological role, involved in the biosynthesis of fluorometabolites. Catalyzes the formation of a C-F bond by combining S-adenosyl-L-methionine (SAM) and fluoride to generate 5'-fluoro-5'-deoxyadenosine (5'-FDA) and L-methionine. It can also use 2'-deoxyadenosine in place of adenosine as substrate. The chain is Fluorinase from Streptantibioticus cattleyicolor (Streptomyces cattleya).